We begin with the raw amino-acid sequence, 576 residues long: Proline--tRNA ligase (576 aa).

It belongs to the class-II aminoacyl-tRNA synthetase family. ProS type 1 subfamily. As to quaternary structure, homodimer.

Its subcellular location is the cytoplasm. It catalyses the reaction tRNA(Pro) + L-proline + ATP = L-prolyl-tRNA(Pro) + AMP + diphosphate. Functionally, catalyzes the attachment of proline to tRNA(Pro) in a two-step reaction: proline is first activated by ATP to form Pro-AMP and then transferred to the acceptor end of tRNA(Pro). As ProRS can inadvertently accommodate and process non-cognate amino acids such as alanine and cysteine, to avoid such errors it has two additional distinct editing activities against alanine. One activity is designated as 'pretransfer' editing and involves the tRNA(Pro)-independent hydrolysis of activated Ala-AMP. The other activity is designated 'posttransfer' editing and involves deacylation of mischarged Ala-tRNA(Pro). The misacylated Cys-tRNA(Pro) is not edited by ProRS. The chain is Proline--tRNA ligase from Bordetella bronchiseptica (strain ATCC BAA-588 / NCTC 13252 / RB50) (Alcaligenes bronchisepticus).